A 334-amino-acid polypeptide reads, in one-letter code: MLDDRAKLLLKALIERYIADGQPVGSRTLSRSSGLDLSPATIRNVMADLEDIGLIASPHTSAGRIPTAKGYRLFVDTMLTVQRGELCSPELAPDQPQKVIANAAQLLSSLSQFVGVVMAPRRPSVFRHIEFLRLSERRLLVIIVSPDGDVQNRVIFTEVDHSQSQLAEAANFLNSHYSGLGMEEVRERLKTEVDQLRGEIASLMQAAVNVGSEAMAASQEEVVISGERNLLALSDFSNDMGNLRKAFDLFEQKTQILRLLDVSNRAEGVRIFIGGESQVVPFEELSVVSAPYEVDGQVVGTLGVIGPTRMPYDRMIQIVDITSKLVTNALSHRR.

The protein belongs to the HrcA family.

Functionally, negative regulator of class I heat shock genes (grpE-dnaK-dnaJ and groELS operons). Prevents heat-shock induction of these operons. The sequence is that of Heat-inducible transcription repressor HrcA from Paracidovorax citrulli (strain AAC00-1) (Acidovorax citrulli).